The chain runs to 290 residues: Cilia- and flagella-associated protein 298 (290 aa).

It belongs to the CFAP298 family. In terms of assembly, interacts with ZMYND10. In terms of tissue distribution, expressed in the trachea (at protein level).

The protein resides in the cytoplasm. The protein localises to the cytoskeleton. It is found in the cilium basal body. Its function is as follows. Plays a role in motile cilium function, possibly by acting on outer dynein arm assembly. Seems to be important for initiation rather than maintenance of cilium motility. Required for correct positioning of cilia at the apical cell surface, suggesting an additional role in the planar cell polarity (PCP) pathway. May suppress canonical Wnt signaling activity. This is Cilia- and flagella-associated protein 298 from Rattus norvegicus (Rat).